Reading from the N-terminus, the 266-residue chain is Type III pantothenate kinase (266 aa).

An ATP-binding site is contributed by 6 to 13 (DAGNTNIV). Substrate-binding positions include tyrosine 100 and 107–110 (GADR). Residue aspartate 109 is the Proton acceptor of the active site. Residue aspartate 129 coordinates K(+). An ATP-binding site is contributed by threonine 132. Threonine 184 is a substrate binding site.

This sequence belongs to the type III pantothenate kinase family. In terms of assembly, homodimer. It depends on NH4(+) as a cofactor. K(+) serves as cofactor.

Its subcellular location is the cytoplasm. It catalyses the reaction (R)-pantothenate + ATP = (R)-4'-phosphopantothenate + ADP + H(+). Its pathway is cofactor biosynthesis; coenzyme A biosynthesis; CoA from (R)-pantothenate: step 1/5. Its function is as follows. Catalyzes the phosphorylation of pantothenate (Pan), the first step in CoA biosynthesis. This chain is Type III pantothenate kinase, found in Clostridium beijerinckii (strain ATCC 51743 / NCIMB 8052) (Clostridium acetobutylicum).